The following is a 70-amino-acid chain: Gas vesicle protein A (70 aa).

This sequence belongs to the gas vesicle GvpA family. In terms of assembly, the gas vesicle shell is 2 nm thick and consists of a single layer of this protein. It forms helical ribs nearly perpendicular to the long axis of the vesicle.

The protein localises to the gas vesicle shell. Gas vesicles are hollow, gas filled proteinaceous nanostructures found in some microorganisms. During planktonic growth they allow positioning of the organism at a favorable depth for light or nutrient acquisition. GvpA forms the protein shell. This chain is Gas vesicle protein A, found in Ancylobacter aquaticus.